Here is a 93-residue protein sequence, read N- to C-terminus: Small ribosomal subunit protein uS19 (93 aa).

It belongs to the universal ribosomal protein uS19 family.

Its function is as follows. Protein S19 forms a complex with S13 that binds strongly to the 16S ribosomal RNA. This chain is Small ribosomal subunit protein uS19, found in Thermoanaerobacter pseudethanolicus (strain ATCC 33223 / 39E) (Clostridium thermohydrosulfuricum).